Consider the following 237-residue polypeptide: Periplasmic deoxyribonuclease (237 aa).

A signal peptide spans 1 to 27 (MSRPSRVLGLPLLSLGLTLLVSTPLQA).

Belongs to the EndA/NucM nuclease family.

It is found in the periplasm. Endonuclease which is capable of degrading plasmid DNA. The sequence is that of Periplasmic deoxyribonuclease (dnsH) from Aeromonas hydrophila.